Consider the following 282-residue polypeptide: Shikimate dehydrogenase (NADP(+)) (282 aa).

Shikimate-binding positions include 16 to 18 (SLS) and threonine 63. Lysine 67 (proton acceptor) is an active-site residue. Shikimate-binding residues include asparagine 88 and aspartate 103. NADP(+)-binding positions include 128–132 (GAGGA) and glycine 243.

This sequence belongs to the shikimate dehydrogenase family. As to quaternary structure, homodimer.

The catalysed reaction is shikimate + NADP(+) = 3-dehydroshikimate + NADPH + H(+). It participates in metabolic intermediate biosynthesis; chorismate biosynthesis; chorismate from D-erythrose 4-phosphate and phosphoenolpyruvate: step 4/7. In terms of biological role, involved in the biosynthesis of the chorismate, which leads to the biosynthesis of aromatic amino acids. Catalyzes the reversible NADPH linked reduction of 3-dehydroshikimate (DHSA) to yield shikimate (SA). This chain is Shikimate dehydrogenase (NADP(+)), found in Xylella fastidiosa (strain Temecula1 / ATCC 700964).